The chain runs to 384 residues: Ceramide very long chain fatty acid hydroxylase SCS7 (384 aa).

The Cytoplasmic portion of the chain corresponds to 1-197 (MSTNTSKTLE…NFLEPLTKTA (197 aa)). The region spanning 9–90 (LELFSKKTVQ…EDEYLIGYLA (82 aa)) is the Cytochrome b5 heme-binding domain. 2 residues coordinate heme: His-45 and His-72. Residues 198-216 (WWVVPVAWLPVVVYHMGVA) form a helical membrane-spanning segment. Over 217–221 (LKNMN) the chain is Lumenal. A helical transmembrane segment spans residues 222–246 (QLFACFLFCVGVFVWTLIEYGLHRF). Zn(2+) contacts are provided by His-244, His-249, His-268, His-271, and His-272. The Cytoplasmic portion of the chain corresponds to 247–284 (LFHFDDWLPESNIAFATHFLLHGCHHYLPMDKYRLVMP). Residues 285–302 (PTLFVILCAPFYKLVFAL) form a helical membrane-spanning segment. Over 303 to 304 (LP) the chain is Lumenal. The helical transmembrane segment at 305 to 328 (LYWAYAGFAGGLFGYVCYDECHFF) threads the bilayer. Zn(2+)-binding residues include His-326, His-330, His-345, His-348, and His-349. The Cytoplasmic portion of the chain corresponds to 329–384 (LHHSKLPPFMRKLKKYHLEHHYKNYQLGFGVTSWFWDEVFGTYLGPDAPLSKMKYE).

Belongs to the sterol desaturase family. SCS7 subfamily. Zn(2+) serves as cofactor.

Its subcellular location is the endoplasmic reticulum membrane. It carries out the reaction an N-(1,2 saturated acyl)-(4R)-hydroxysphinganine + 2 Fe(II)-[cytochrome b5] + O2 + 2 H(+) = an N-(2R-hydroxyacyl)-4R-hydroxysphinganine + 2 Fe(III)-[cytochrome b5] + H2O. It catalyses the reaction an N-(1,2-saturated acyl)sphinganine + 2 Fe(II)-[cytochrome b5] + O2 + 2 H(+) = an N-[(2'R)-hydroxyacyl]sphinganine + 2 Fe(III)-[cytochrome b5] + H2O. The catalysed reaction is N-hexacosanoyl-(4R)-hydroxysphinganine + 2 Fe(II)-[cytochrome b5] + O2 + 2 H(+) = N-(2-hydroxyhexacosanyl)-(4R)-hydroxysphinganine + 2 Fe(III)-[cytochrome b5] + H2O. The protein operates within sphingolipid metabolism. In terms of biological role, ceramide hydroxylase involved in the hydroxylation of sphingolipid-associated very long chain fatty acids. Postulated to hydroxylate the very long chain fatty acid of dihydroceramides and phytoceramides at C-2. The chain is Ceramide very long chain fatty acid hydroxylase SCS7 from Saccharomyces cerevisiae (strain ATCC 204508 / S288c) (Baker's yeast).